A 547-amino-acid chain; its full sequence is uncharacterized protein (547 aa).

Over 1 to 21 (MVKKHQNSKMGNTNHFGHLKS) the chain is Extracellular. Residues 22–42 (FVGGNVVALGAGTPYLFSFYA) traverse the membrane as a helical segment. At 43–58 (PQLLSKCHIPVSASSK) the chain is on the cytoplasmic side. Residues 59–79 (LSFSLTIGSSLMGILAGIVVD) form a helical membrane-spanning segment. At 80-83 (RSPK) the chain is on the extracellular side. The helical transmembrane segment at 84–104 (LSCLIGSMCVFIAYLILNLCY) threads the bilayer. At 105 to 110 (KHEWSS) the chain is on the cytoplasmic side. A helical transmembrane segment spans residues 111-131 (TFLISLSLVLIGYGSVSGFYA). Residues 132-144 (SVKCANTNFPQHR) lie on the Extracellular side of the membrane. The chain crosses the membrane as a helical span at residues 145–165 (GTAGAFPVSLYGLSGMVFSYL). Residues 166–175 (CSKLFGENIE) lie on the Cytoplasmic side of the membrane. A helical transmembrane segment spans residues 176–196 (HVFIFLMVACGCMILVGYFSL). At 197 to 323 (DIFSNAEGDD…LKSSTFIGYY (127 aa)) the chain is on the extracellular side. S237 is modified (phosphoserine). The disordered stretch occupies residues 275-300 (LLSPSSPHTKYDFEDENTSKNTVGEN). Residues 324–344 (IVLGILQGVGLMYIYSVGFMV) form a helical membrane-spanning segment. Over 345-398 (QAQVSTPPLNQLPINAEKIQSLQVTLLSLLSFCGRLSSGPISDFLVKKFKAQRL) the chain is Cytoplasmic. A helical transmembrane segment spans residues 399–419 (WNIVIASLLVFLASNKISHDF). The Extracellular segment spans residues 420–437 (SSIEDPSLRASKSFKNIS). A helical membrane pass occupies residues 438–458 (VCSAIFGYSFGVLFGTFPSIV). Residues 459–469 (ADRFGTNGYST) are Cytoplasmic-facing. The helical transmembrane segment at 470 to 490 (LWGVLTTGGVFSVSVFTDILG) threads the bilayer. At 491 to 514 (RDFKANTGDDDGNCKKGVLCYSYT) the chain is on the extracellular side. The chain crosses the membrane as a helical span at residues 515 to 535 (FMVTKYCAAFNLLFVLGIIGY). At 536 to 547 (TYYRRRATANSL) the chain is on the cytoplasmic side.

It localises to the membrane. This is an uncharacterized protein from Saccharomyces cerevisiae (strain ATCC 204508 / S288c) (Baker's yeast).